The sequence spans 525 residues: cAMP-dependent protein kinase regulatory subunit (525 aa).

Residues 28–213 are dimerization and phosphorylation; sequence QFCANWFNSK…RIRGSIGNNL (186 aa). 2 disordered regions span residues 114–146 and 170–196; these read MDASQSPDSTPAPATPAAPAAPAAPAAPFSSLG and SVSAESMAPSAANAESDGSPLPKTVIP. Low complexity predominate over residues 124 to 146; the sequence is PAPATPAAPAAPAAPAAPFSSLG. Residue S170 is modified to Phosphoserine; by autocatalysis. A nucleoside 3',5'-cyclic phosphate-binding positions include 214 to 345 and 348 to 472; these read LFRN…FLMD and LFER…TYGD. 3 residues coordinate 3',5'-cyclic AMP: E295, R304, and E417. The tract at residues 497-525 is disordered; it reads SGADTSFPHPMDSSAKPGEGAWSAPNPFA.

It belongs to the cAMP-dependent kinase regulatory chain family. As to quaternary structure, tetramer, composed of 2 regulatory (R) and 2 catalytic (C) subunits. In the presence of cAMP it dissociates into 2 active monomeric C subunits and an R dimer.

This Mycosarcoma maydis (Corn smut fungus) protein is cAMP-dependent protein kinase regulatory subunit (PKAR).